We begin with the raw amino-acid sequence, 310 residues long: HTH-type transcriptional activator TtdR (310 aa).

The region spanning 6 to 63 is the HTH lysR-type domain; that stretch reads PLAKDLQVLVEIVHSGSFSAAAATLGQTPAFVTKRIQILENTLATTLLNRSARGVALT. A DNA-binding region (H-T-H motif) is located at residues 23–42; it reads FSAAAATLGQTPAFVTKRIQ.

This sequence belongs to the LysR transcriptional regulatory family.

Positive regulator required for L-tartrate-dependent anaerobic growth on glycerol. Induces expression of the ttdA-ttdB-ygjE operon. The protein is HTH-type transcriptional activator TtdR (ttdR) of Escherichia coli O6:K15:H31 (strain 536 / UPEC).